The chain runs to 583 residues: Aspartate--tRNA(Asp/Asn) ligase (583 aa).

E172 is an L-aspartate binding site. Positions 196–199 are aspartate; the sequence is QMLK. Position 218 (R218) interacts with L-aspartate. ATP is bound by residues 218-220 and Q227; that span reads RDE. H446 contributes to the L-aspartate binding site. Residue E480 coordinates ATP. R487 is a binding site for L-aspartate. 532–535 contacts ATP; that stretch reads GLDR.

The protein belongs to the class-II aminoacyl-tRNA synthetase family. Type 1 subfamily. Homodimer.

The protein resides in the cytoplasm. The catalysed reaction is tRNA(Asx) + L-aspartate + ATP = L-aspartyl-tRNA(Asx) + AMP + diphosphate. Functionally, aspartyl-tRNA synthetase with relaxed tRNA specificity since it is able to aspartylate not only its cognate tRNA(Asp) but also tRNA(Asn). Reaction proceeds in two steps: L-aspartate is first activated by ATP to form Asp-AMP and then transferred to the acceptor end of tRNA(Asp/Asn). The polypeptide is Aspartate--tRNA(Asp/Asn) ligase (Streptococcus mutans serotype c (strain ATCC 700610 / UA159)).